We begin with the raw amino-acid sequence, 61 residues long: Chi-conotoxin MrIA (61 aa).

Positions 1–19 are cleaved as a signal peptide; sequence MRCLPVLIILLLLTASAPG. Positions 20–48 are excised as a propeptide; it reads VVVLPKTEDDVPMSSVYGNGKSILRGILR. Intrachain disulfides connect cysteine 52-cysteine 61 and cysteine 53-cysteine 58. 4-hydroxyproline is present on proline 60.

Belongs to the conotoxin T superfamily. In terms of tissue distribution, expressed by the venom duct.

Its subcellular location is the secreted. Functionally, chi-conotoxins inhibit the neuronal noradrenaline transporter (NET/SLC6A2). Activity has been described on both human (inhibition of norepinephrine uptake is IC(50)=1.26 uM) and rat (pIC(50)=6.21 corresponding IC(50)=0.16 uM) transporters. Acts as a reversible non-competitive inhibitor. The polypeptide is Chi-conotoxin MrIA (Conus marmoreus (Marble cone)).